The chain runs to 252 residues: Biosynthetic peptidoglycan transglycosylase (252 aa).

The chain crosses the membrane as a helical span at residues 23–43; it reads IGFLLGCIVAGVVAMQVYFFL.

Belongs to the glycosyltransferase 51 family.

Its subcellular location is the cell inner membrane. The catalysed reaction is [GlcNAc-(1-&gt;4)-Mur2Ac(oyl-L-Ala-gamma-D-Glu-L-Lys-D-Ala-D-Ala)](n)-di-trans,octa-cis-undecaprenyl diphosphate + beta-D-GlcNAc-(1-&gt;4)-Mur2Ac(oyl-L-Ala-gamma-D-Glu-L-Lys-D-Ala-D-Ala)-di-trans,octa-cis-undecaprenyl diphosphate = [GlcNAc-(1-&gt;4)-Mur2Ac(oyl-L-Ala-gamma-D-Glu-L-Lys-D-Ala-D-Ala)](n+1)-di-trans,octa-cis-undecaprenyl diphosphate + di-trans,octa-cis-undecaprenyl diphosphate + H(+). Its pathway is cell wall biogenesis; peptidoglycan biosynthesis. In terms of biological role, peptidoglycan polymerase that catalyzes glycan chain elongation from lipid-linked precursors. The chain is Biosynthetic peptidoglycan transglycosylase from Cupriavidus pinatubonensis (strain JMP 134 / LMG 1197) (Cupriavidus necator (strain JMP 134)).